The following is a 1414-amino-acid chain: Alpha-(1-&gt;3)-arabinofuranosyltransferase (1414 aa).

Transmembrane regions (helical) follow at residues 57-77 (YLFP…PGWV), 81-101 (LWWA…AEAL), 128-148 (AISS…PVIL), 167-187 (VALM…AAVI), 203-223 (AWWL…LLML), 273-293 (STTA…GLAL), 302-322 (LITM…GGLG), 352-372 (LPLA…GSAP), and 389-409 (VAVA…AWTA). One can recognise an F5/8 type C domain in the interval 687-845 (YPSDGADLVY…QYDASGFAHP (159 aa)). 4 helical membrane-spanning segments follow: residues 1253-1273 (VGLI…LIPV), 1297-1317 (ALVA…GAAM), 1333-1353 (VWDN…GSVL), and 1364-1384 (YVGH…FLAA). The interval 1393–1414 (PEPSEDGRSAKPEHTGASAHAG) is disordered. Residues 1394–1406 (EPSEDGRSAKPEH) are compositionally biased toward basic and acidic residues.

It localises to the membrane. It carries out the reaction Adds an alpha-D-arabinofuranosyl group from trans,octacis-decaprenylphospho-beta-D-arabinofuranose at the 3-O-position of an alpha-(1-&gt;5)-arabinofuranan chain attached to a beta-(1-&gt;5)-galactofuranan chain.. It participates in cell wall biogenesis; cell wall polysaccharide biosynthesis. In terms of biological role, involved in the biosynthesis of the arabinogalactan (AG) region of the mycolylarabinogalactan-peptidoglycan (mAGP) complex, an essential component of the mycobacterial cell wall. Catalyzes the addition of an arabinofuranosyl (Araf) residue from the sugar donor decaprenyl-phospho-arabinose (DPA) on the C-3 of an alpha-(1-&gt;5)-linked Araf from the arabinan backbone of AG. The chain is Alpha-(1-&gt;3)-arabinofuranosyltransferase (aftD) from Mycolicibacterium smegmatis (strain ATCC 700084 / mc(2)155) (Mycobacterium smegmatis).